The primary structure comprises 151 residues: 3-hydroxyacyl-[acyl-carrier-protein] dehydratase FabZ (151 aa).

Histidine 54 is an active-site residue.

This sequence belongs to the thioester dehydratase family. FabZ subfamily. In terms of assembly, oligomer. The N-terminus is blocked.

The protein resides in the cytoplasm. It carries out the reaction a (3R)-hydroxyacyl-[ACP] = a (2E)-enoyl-[ACP] + H2O. In terms of biological role, involved in unsaturated fatty acids biosynthesis. Catalyzes the dehydration of short chain beta-hydroxyacyl-ACPs and long chain saturated and unsaturated beta-hydroxyacyl-ACPs. The sequence is that of 3-hydroxyacyl-[acyl-carrier-protein] dehydratase FabZ from Escherichia coli O9:H4 (strain HS).